A 593-amino-acid chain; its full sequence is DNA primase (593 aa).

Residues 38–62 form a CHC2-type zinc finger; it reads CPFHQEKTPSFTVSDSKRFFYCFGC. One can recognise a Toprim domain in the interval 250-332; it reads NRSILVEGYF…EKKISFIRLP (83 aa). Residues Glu-256, Asp-300, and Asp-302 each coordinate Mg(2+).

The protein belongs to the DnaG primase family. In terms of assembly, monomer. Interacts with DnaB. The cofactor is Zn(2+). Mg(2+) is required as a cofactor.

It carries out the reaction ssDNA + n NTP = ssDNA/pppN(pN)n-1 hybrid + (n-1) diphosphate.. In terms of biological role, RNA polymerase that catalyzes the synthesis of short RNA molecules used as primers for DNA polymerase during DNA replication. The polypeptide is DNA primase (Rickettsia prowazekii (strain Madrid E)).